The primary structure comprises 283 residues: MKQYLELCQRIVDDGVWIENKRTNKRCLTVVNADLTFDVANNQFPLITTRKSFWKSAIAELLGYIRGYDNAADFRALGTKTWDMNANDNLAWLNNPHRKGEDDMGRVYGVQGRSWQKPDGSTIDQLRKIVDNLSEGIDDRGEILTFYNPGEFDLGCLRPCMHTHTFSLLGDTLHLTSYQRSCDVPLGLNFNQVQVYTLLALVAQITGKKPGLAYHKIINAHIYEDQLSLLRDVQLTRTPFAAPKLIINPKIKCLEDLETWVTMDDFDVIGYEHHEAIKYPFSV.

Arg22 is a dUMP binding site. Cys160 functions as the Nucleophile in the catalytic mechanism. Residues Arg180 to Asp183, Asn191, and His221 to Tyr223 each bind dUMP. Asp183 contacts (6R)-5,10-methylene-5,6,7,8-tetrahydrofolate. A (6R)-5,10-methylene-5,6,7,8-tetrahydrofolate-binding site is contributed by Ser282.

This sequence belongs to the thymidylate synthase family. Bacterial-type ThyA subfamily. As to quaternary structure, homodimer.

The protein localises to the cytoplasm. The catalysed reaction is dUMP + (6R)-5,10-methylene-5,6,7,8-tetrahydrofolate = 7,8-dihydrofolate + dTMP. The protein operates within pyrimidine metabolism; dTTP biosynthesis. Catalyzes the reductive methylation of 2'-deoxyuridine-5'-monophosphate (dUMP) to 2'-deoxythymidine-5'-monophosphate (dTMP) while utilizing 5,10-methylenetetrahydrofolate (mTHF) as the methyl donor and reductant in the reaction, yielding dihydrofolate (DHF) as a by-product. This enzymatic reaction provides an intracellular de novo source of dTMP, an essential precursor for DNA biosynthesis. In Photobacterium profundum (strain SS9), this protein is Thymidylate synthase.